Reading from the N-terminus, the 667-residue chain is Primary amine oxidase (667 aa).

An N-terminal signal peptide occupies residues 1-18 (KFALFSVLTLLSFHAVFS). Asn-149 carries an N-linked (GlcNAc...) asparagine glycan. A disulfide bridge links Cys-155 with Cys-176. The segment at 216–246 (PTAENTEYQVSKQSPPFGPKQHSLTSHQPQG) is disordered. Positions 218 to 229 (AENTEYQVSKQS) are enriched in polar residues. The N-linked (GlcNAc...) asparagine glycan is linked to Asn-252. 316 to 327 (FFDSGEFGFGLS) lines the substrate pocket. Asp-318 serves as the catalytic Proton acceptor. Cysteines 337 and 363 form a disulfide. N-linked (GlcNAc...) asparagine glycosylation is present at Asn-382. 402 to 407 (VGNYDN) contributes to the substrate binding site. The Schiff-base intermediate with substrate; via topaquinone role is filled by Tyr-405. Tyr-405 is modified (2',4',5'-topaquinone). Cu cation contacts are provided by His-460 and His-462. 3 residues coordinate Mn(2+): Asp-469, Phe-470, and Asp-471. The N-linked (GlcNAc...) asparagine glycan is linked to Asn-576. Mn(2+) contacts are provided by Asp-610 and Ile-611. His-621 is a binding site for Cu cation.

Belongs to the copper/topaquinone oxidase family. Homodimer. Cu cation serves as cofactor. The cofactor is Zn(2+). It depends on L-topaquinone as a cofactor. Requires Mn(2+) as cofactor. Post-translationally, glycosylated; contains two carbohydrate chains per monomer. In terms of processing, topaquinone (TPQ) is generated by copper-dependent autoxidation of a specific tyrosyl residue.

It catalyses the reaction a primary methyl amine + O2 + H2O = an aldehyde + H2O2 + NH4(+). The chain is Primary amine oxidase from Lens culinaris (Lentil).